Here is a 1040-residue protein sequence, read N- to C-terminus: Multidrug resistance protein MdtB (1040 aa).

Transmembrane regions (helical) follow at residues 16–36 (FIMR…AGII), 347–367 (LMMA…NIPA), 369–389 (IIPG…MVFL), 396–416 (LTLM…IVVI), 440–460 (IGFT…PLLF), 472–492 (FAIT…TLTP), 537–557 (WLTL…WVFI), 863–883 (LGST…VLGI), 888–908 (FIHP…ALLA), 911–931 (IAGS…IGIV), 968–988 (ILMT…STGV), and 998–1018 (IGMV…TPVI).

Belongs to the resistance-nodulation-cell division (RND) (TC 2.A.6) family. MdtB subfamily. In terms of assembly, part of a tripartite efflux system composed of MdtA, MdtB and MdtC. MdtB forms a heteromultimer with MdtC.

The protein resides in the cell inner membrane. The polypeptide is Multidrug resistance protein MdtB (Shigella boydii serotype 18 (strain CDC 3083-94 / BS512)).